We begin with the raw amino-acid sequence, 160 residues long: Phosphopantetheine adenylyltransferase (160 aa).

Serine 9 provides a ligand contact to substrate. Residues 9–10 (SF) and histidine 17 each bind ATP. Lysine 41, isoleucine 73, and lysine 87 together coordinate substrate. Residues 88-90 (GLR), glutamate 98, and 122-128 (YSFVSSS) each bind ATP.

Belongs to the bacterial CoaD family. In terms of assembly, homohexamer. Mg(2+) serves as cofactor.

The protein localises to the cytoplasm. The enzyme catalyses (R)-4'-phosphopantetheine + ATP + H(+) = 3'-dephospho-CoA + diphosphate. The protein operates within cofactor biosynthesis; coenzyme A biosynthesis; CoA from (R)-pantothenate: step 4/5. Reversibly transfers an adenylyl group from ATP to 4'-phosphopantetheine, yielding dephospho-CoA (dPCoA) and pyrophosphate. This Mycolicibacterium gilvum (strain PYR-GCK) (Mycobacterium gilvum (strain PYR-GCK)) protein is Phosphopantetheine adenylyltransferase.